A 238-amino-acid polypeptide reads, in one-letter code: Ribonuclease PH (238 aa).

Residues arginine 86 and 124-126 (GTR) each bind phosphate.

Belongs to the RNase PH family. In terms of assembly, homohexameric ring arranged as a trimer of dimers.

It carries out the reaction tRNA(n+1) + phosphate = tRNA(n) + a ribonucleoside 5'-diphosphate. Phosphorolytic 3'-5' exoribonuclease that plays an important role in tRNA 3'-end maturation. Removes nucleotide residues following the 3'-CCA terminus of tRNAs; can also add nucleotides to the ends of RNA molecules by using nucleoside diphosphates as substrates, but this may not be physiologically important. Probably plays a role in initiation of 16S rRNA degradation (leading to ribosome degradation) during starvation. The chain is Ribonuclease PH from Maricaulis maris (strain MCS10) (Caulobacter maris).